The following is a 90-amino-acid chain: Probable Fe(2+)-trafficking protein (90 aa).

The protein belongs to the Fe(2+)-trafficking protein family.

Its function is as follows. Could be a mediator in iron transactions between iron acquisition and iron-requiring processes, such as synthesis and/or repair of Fe-S clusters in biosynthetic enzymes. In Pseudomonas syringae pv. tomato (strain ATCC BAA-871 / DC3000), this protein is Probable Fe(2+)-trafficking protein.